Here is a 396-residue protein sequence, read N- to C-terminus: Na(+)/H(+) antiporter NhaA 1 (396 aa).

A run of 11 helical transmembrane segments spans residues 15-35 (AGIFLLAAAVFALIFSNVGFL), 60-80 (LEFWVNDALMAIFFFSIGLEL), 96-116 (FLPSFAAIGGVIFPAVIFAVI), 126-146 (GWAIPTATDIAFAVGVMALLG), 155-175 (IFVLTLAIMDDLCAIVIIALF), 179-199 (ALNFTYLGLAFVCFLVLLVMC), 207-227 (IPFVIMSILLWIFVLHSGIHA), 255-275 (SLGYFVNYVVLPLFAFANAGV), 290-312 (PLGVMLGLFLGKQLGIFTFSWFL), 329-349 (LYAVAIICGIGFTMALFVDNL), and 363-383 (LAILLGSIISGVVGYFVAKAV).

This sequence belongs to the NhaA Na(+)/H(+) (TC 2.A.33) antiporter family.

Its subcellular location is the cell inner membrane. It carries out the reaction Na(+)(in) + 2 H(+)(out) = Na(+)(out) + 2 H(+)(in). In terms of biological role, na(+)/H(+) antiporter that extrudes sodium in exchange for external protons. This Campylobacter hominis (strain ATCC BAA-381 / DSM 21671 / CCUG 45161 / LMG 19568 / NCTC 13146 / CH001A) protein is Na(+)/H(+) antiporter NhaA 1.